The sequence spans 367 residues: DNA replication and repair protein RecF (367 aa).

An ATP-binding site is contributed by 30 to 37 (GSNGSGKT).

It belongs to the RecF family.

Its subcellular location is the cytoplasm. In terms of biological role, the RecF protein is involved in DNA metabolism; it is required for DNA replication and normal SOS inducibility. RecF binds preferentially to single-stranded, linear DNA. It also seems to bind ATP. The protein is DNA replication and repair protein RecF of Pseudomonas putida (strain ATCC 700007 / DSM 6899 / JCM 31910 / BCRC 17059 / LMG 24140 / F1).